Here is a 74-residue protein sequence, read N- to C-terminus: UPF0352 protein HAPS_0210 (74 aa).

This sequence belongs to the UPF0352 family.

This chain is UPF0352 protein HAPS_0210, found in Glaesserella parasuis serovar 5 (strain SH0165) (Haemophilus parasuis).